The chain runs to 130 residues: Small ribosomal subunit protein uS11 (130 aa).

The protein belongs to the universal ribosomal protein uS11 family. In terms of assembly, part of the 30S ribosomal subunit. Interacts with proteins S7 and S18. Binds to IF-3.

Its function is as follows. Located on the platform of the 30S subunit, it bridges several disparate RNA helices of the 16S rRNA. Forms part of the Shine-Dalgarno cleft in the 70S ribosome. This Teredinibacter turnerae (strain ATCC 39867 / T7901) protein is Small ribosomal subunit protein uS11.